Reading from the N-terminus, the 148-residue chain is Arginine repressor (148 aa).

It belongs to the ArgR family.

The protein localises to the cytoplasm. Its pathway is amino-acid biosynthesis; L-arginine biosynthesis [regulation]. Regulates arginine biosynthesis genes. This Chlorobium phaeovibrioides (strain DSM 265 / 1930) (Prosthecochloris vibrioformis (strain DSM 265)) protein is Arginine repressor.